Reading from the N-terminus, the 4128-residue chain is DNA-dependent protein kinase catalytic subunit (4128 aa).

An N6-acetyllysine modification is found at Lys117. Residues 288 to 323 form an HEAT 1 repeat; that stretch reads DNYITLFEVLSKWCSHTNVELKKAAHSALESFLRQI. Residues Ser511, Ser686, Ser840, and Ser891 each carry the phosphoserine modification. HEAT repeat units follow at residues 1001-1037 and 1050-1086; these read QDTV…LKWS and PVNS…YKEF. Ser1062 carries the phosphoserine modification. Residue Lys1206 is modified to N6-acetyllysine. An interaction with C1D region spans residues 1501 to 1536; sequence LDPSCKSLANGLLELAFGFGGLCDHLVSLLLNSAML. Residues 1501 to 1536 form a leucine-zipper region; the sequence is LDPSCKSLANGLLELAFGFGGLCDHLVSLLLNSAML. One copy of the TPR 1 repeat lies at 1720–1753; the sequence is PMKSDEFPPDSLKYNNYVDCMKKFLDALELSQSP. Lys1967 carries the post-translational modification N6-acetyllysine. Residues 2049-2071 are disordered; it reads YSYSSQDRKPTTGHFQRREHQDS. Ser2053 is modified (phosphoserine; by autocatalysis). A compositionally biased stretch (basic and acidic residues) spans 2054–2070; that stretch reads QDRKPTTGHFQRREHQD. The residue at position 2255 (Lys2255) is an N6-acetyllysine. Residues 2432–3213 are KIP-binding; sequence LDIVYKMVAK…DHSMSVDEDE (782 aa). Phosphothreonine is present on Thr2531. Thr2605 carries the post-translational modification Phosphothreonine; by autocatalysis. A Phosphoserine; by autocatalysis modification is found at Ser2608. A disordered region spans residues 2614 to 2635; it reads TQTQEGPLSDQRQKPGQVRATQ. A phosphothreonine; by autocatalysis mark is found at Thr2634 and Thr2643. The interval 2738–2766 is may split the end of the DNA molecule, with the two strands separating around the region; it reads EKLSLLYAKRGLMEQKLEKDIKSEFKMKQ. Residues 2907-3539 enclose the FAT domain; the sequence is PTKRVRGKTC…IYPFIISSES (633 aa). TPR repeat units lie at residues 2921–2954 and 2956–2983; these read VLRW…TQDT and NALL…LEWV. Position 3206 is a phosphoserine (Ser3206). Residues Lys3241, Lys3260, Lys3638, and Lys3642 each carry the N6-acetyllysine modification. A PI3K/PI4K catalytic domain is found at 3722 to 4053; the sequence is FDERVKVMLS…IRYAKRKLAG (332 aa). The tract at residues 3728-3734 is G-loop; the sequence is VMLSLRK. Ser3731 and Ser3821 each carry phosphoserine. A catalytic loop region spans residues 3919–3927; it reads GIGDRHLNN. Positions 3939–3964 are activation loop; that stretch reads GIDFGHAFGSATQFLPVPELMPFRLT. Residue Ser4026 is modified to Phosphoserine. The FATC domain occupies 4096–4128; the sequence is SGLSEETQVKCLVDQATDPNILGRTWEGWEPWM.

It belongs to the PI3/PI4-kinase family. DNA-PK is a heterotrimer of PRKDC and the Ku dimer (composed of XRCC6/Ku70 and XRCC5/Ku86). Formation of this complex may be promoted by interaction with ILF3. Component of the core long-range non-homologous end joining (NHEJ) complex (also named DNA-PK complex) composed of PRKDC, LIG4, XRCC4, XRCC6/Ku70, XRCC5/Ku86 and NHEJ1/XLF. Additional component of the NHEJ complex includes PAXX. Following autophosphorylation, PRKDC dissociates from DNA. Interacts with DNA-PKcs-interacting protein (KIP) with the region upstream the kinase domain. PRKDC alone also interacts with and phosphorylates DCLRE1C, thereby activating the latent endonuclease activity of this protein. Interacts with C1D. Interacts with TTI1 and TELO2. Interacts with CIB1. Interacts with SETX. Interacts with NR4A3; the DNA-dependent protein kinase complex DNA-PK phosphorylates and activates NR4A3 and prevents NR4A3 ubiquitination and degradation. Interacts with BRAT1. Part of the HDP-RNP complex composed of at least HEXIM1, PRKDC, XRCC5, XRCC6, paraspeckle proteins (SFPQ, NONO, PSPC1, RBM14, and MATR3) and NEAT1 RNA. Interacts with KAT5. In terms of processing, autophosphorylated at two clusters, the T2609 cluster and the S2056 cluster. Autophosphorylated on Ser-2053, Thr-2605, Thr-2634 and Thr-2643. Ser-2053 and Thr-2605 are DNA damage-inducible phosphorylation sites (inducible with ionizing radiation, IR) dephosphorylated by PPP5C. Autophosphorylation induces a conformational change that leads to remodeling of the DNA-PK complex, requisite for efficient end processing and DNA repair. Autophosphorylation in trans within DNA-PK complexes loaded on DNA ends leads to the dissociation of PRKDC from DNA and the transition into the short-range NHEJ complex. Autophosphorylation of the T2609 cluster is required for hematopoietic development and protein synthesis in erythrocytes precursors. Post-translationally, S-nitrosylated by GAPDH. Polyubiquitinated by RNF144A, leading to proteasomal degradation.

Its subcellular location is the nucleus. The protein resides in the nucleolus. The protein localises to the cytoplasm. It localises to the cytosol. The enzyme catalyses L-seryl-[protein] + ATP = O-phospho-L-seryl-[protein] + ADP + H(+). It catalyses the reaction L-threonyl-[protein] + ATP = O-phospho-L-threonyl-[protein] + ADP + H(+). Its activity is regulated as follows. Activity seems to be attenuated by autophosphorylation. Binding to the SL1 region of U3 small nucleolar RNA promotes auto-phosphorylation activity. Inhibited by wortmannin. Functionally, serine/threonine-protein kinase that acts as a molecular sensor for DNA damage. Involved in DNA non-homologous end joining (NHEJ) required for double-strand break (DSB) repair and V(D)J recombination. Must be bound to DNA to express its catalytic properties. Promotes processing of hairpin DNA structures in V(D)J recombination by activation of the hairpin endonuclease artemis (DCLRE1C). Recruited by XRCC5 and XRCC6 to DNA ends and is required to (1) protect and align broken ends of DNA, thereby preventing their degradation, (2) and sequester the DSB for repair by NHEJ. Acts as a scaffold protein to aid the localization of DNA repair proteins to the site of damage. The assembly of the DNA-PK complex at DNA ends is also required for the NHEJ ligation step. Found at the ends of chromosomes, suggesting a further role in the maintenance of telomeric stability and the prevention of chromosomal end fusion. Also involved in modulation of transcription. As part of the DNA-PK complex, involved in the early steps of ribosome assembly by promoting the processing of precursor rRNA into mature 18S rRNA in the small-subunit processome. Binding to U3 small nucleolar RNA, recruits PRKDC and XRCC5/Ku86 to the small-subunit processome. Recognizes the substrate consensus sequence [ST]-Q. Phosphorylates 'Ser-139' of histone variant H2AX, thereby regulating DNA damage response mechanism. Phosphorylates ASF1A, DCLRE1C, c-Abl/ABL1, histone H1, HSPCA, c-jun/JUN, p53/TP53, PARP1, POU2F1, DHX9, FH, SRF, NHEJ1/XLF, XRCC1, XRCC4, XRCC5, XRCC6, WRN, MYC and RFA2. Can phosphorylate C1D not only in the presence of linear DNA but also in the presence of supercoiled DNA. Ability to phosphorylate p53/TP53 in the presence of supercoiled DNA is dependent on C1D. Acts as a regulator of the phosphatidylinositol 3-kinase/protein kinase B signal transduction by mediating phosphorylation of 'Ser-473' of protein kinase B (PKB/AKT1, PKB/AKT2, PKB/AKT3), promoting their activation. Contributes to the determination of the circadian period length by antagonizing phosphorylation of CRY1 'Ser-588' and increasing CRY1 protein stability, most likely through an indirect mechanism. Plays a role in the regulation of DNA virus-mediated innate immune response by assembling into the HDP-RNP complex, a complex that serves as a platform for IRF3 phosphorylation and subsequent innate immune response activation through the cGAS-STING pathway. Also regulates the cGAS-STING pathway by catalyzing phosphorylation of CGAS, thereby impairing CGAS oligomerization and activation. Also regulates the cGAS-STING pathway by mediating phosphorylation of PARP1. This is DNA-dependent protein kinase catalytic subunit (Prkdc) from Mus musculus (Mouse).